Consider the following 512-residue polypeptide: Maturase K (512 aa).

It belongs to the intron maturase 2 family. MatK subfamily.

The protein localises to the plastid. Its subcellular location is the chloroplast. Its function is as follows. Usually encoded in the trnK tRNA gene intron. Probably assists in splicing its own and other chloroplast group II introns. This chain is Maturase K, found in Lilium tsingtauense (Twilight lily).